A 421-amino-acid polypeptide reads, in one-letter code: UDP-N-acetylglucosamine 1-carboxyvinyltransferase (421 aa).

22–23 contacts phosphoenolpyruvate; that stretch reads KN. Arginine 93 contacts UDP-N-acetyl-alpha-D-glucosamine. The active-site Proton donor is the cysteine 117. Cysteine 117 is modified (2-(S-cysteinyl)pyruvic acid O-phosphothioketal). UDP-N-acetyl-alpha-D-glucosamine-binding positions include 122 to 126, aspartate 308, and isoleucine 330; that span reads RPVDL.

It belongs to the EPSP synthase family. MurA subfamily.

The protein localises to the cytoplasm. It catalyses the reaction phosphoenolpyruvate + UDP-N-acetyl-alpha-D-glucosamine = UDP-N-acetyl-3-O-(1-carboxyvinyl)-alpha-D-glucosamine + phosphate. It participates in cell wall biogenesis; peptidoglycan biosynthesis. Its function is as follows. Cell wall formation. Adds enolpyruvyl to UDP-N-acetylglucosamine. This Pseudomonas putida (strain GB-1) protein is UDP-N-acetylglucosamine 1-carboxyvinyltransferase.